The sequence spans 197 residues: Segregation and condensation protein B (197 aa).

The protein belongs to the ScpB family. In terms of assembly, homodimer. Homodimerization may be required to stabilize the binding of ScpA to the Smc head domains. Component of a cohesin-like complex composed of ScpA, ScpB and the Smc homodimer, in which ScpA and ScpB bind to the head domain of Smc. The presence of the three proteins is required for the association of the complex with DNA.

The protein resides in the cytoplasm. Functionally, participates in chromosomal partition during cell division. May act via the formation of a condensin-like complex containing Smc and ScpA that pull DNA away from mid-cell into both cell halves. The chain is Segregation and condensation protein B from Syntrophotalea carbinolica (strain DSM 2380 / NBRC 103641 / GraBd1) (Pelobacter carbinolicus).